The sequence spans 196 residues: Homeobox protein XENK-2 (196 aa).

Positions 48-72 (PSADESPDNDKELSSNPDSGKKRKR) are disordered. The segment at residues 69-128 (KRKRRVLFSKAQTYELERRFRQQRYLSAPEREHLASLIRLTPTQVKIWFQNHRYKMKRAR) is a DNA-binding region (homeobox).

It belongs to the NK-2 homeobox family. Forebrain and midbrain.

The protein resides in the nucleus. Defines dorsal-ventral domains in developing brain. May play a role in defining positional information along the anterior-posterior (a/p) axis and the dorsal-ventral (d/v) axis of the developing nervous system. May be involved in determining positional or boundary information rather than determining a given cell type. This Xenopus laevis (African clawed frog) protein is Homeobox protein XENK-2.